The sequence spans 105 residues: Large ribosomal subunit protein P2 (105 aa).

The interval 84 to 105 (AEAKKEEPEEEADDDMGFGLFD) is disordered.

The protein belongs to the eukaryotic ribosomal protein P1/P2 family. P1 and P2 exist as dimers at the large ribosomal subunit. Post-translationally, phosphorylated.

In terms of biological role, plays an important role in the elongation step of protein synthesis. In Leishmania donovani, this protein is Large ribosomal subunit protein P2 (ARP-1).